We begin with the raw amino-acid sequence, 885 residues long: Envelope glycoprotein B (885 aa).

An N-terminal signal peptide occupies residues 1–34; sequence MRPRGTPPSFLPLPVLLALAVIAAAGRAAPAAAA. Positions 29 to 46 are enriched in low complexity; it reads APAAAAAPTADPAATPAL. The disordered stretch occupies residues 29–74; that stretch reads APAAAAAPTADPAATPALPEDEEVPDEDGEGVATPAPAANASVEAG. Topologically, residues 35 to 759 are virion surface; the sequence is APTADPAATP…SGVSSFLSNP (725 aa). Positions 47-58 are enriched in acidic residues; sequence PEDEEVPDEDGE. Asn-68 and Asn-122 each carry an N-linked (GlcNAc...) asparagine; by host glycan. 5 disulfide bridges follow: Cys-97–Cys-558, Cys-114–Cys-514, Cys-188–Cys-252, Cys-345–Cys-393, and Cys-581–Cys-618. 2 involved in fusion and/or binding to host membrane regions span residues 154 to 160 and 239 to 246; these read VWFGHRY and RVEAFHRY. N-linked (GlcNAc...) asparagine; by host glycans are attached at residues Asn-379 and Asn-411. A disordered region spans residues 455–478; it reads RRPAGGDPGEAATPGPSVDPPSVE. N-linked (GlcNAc...) asparagine; by host glycosylation occurs at Asn-659. 2 hydrophobic membrane proximal region regions span residues 704-757 and 716-756; these read IDTV…SFLS and LFAG…SSFL. The helical transmembrane segment at 760-780 threads the bilayer; sequence FGALAVGLLVLAGLAAAFFAF. Topologically, residues 781-885 are intravirion; the sequence is RYVMRLQRNP…PLRDTDEEEL (105 aa). The short motif at 834–837 is the Golgi targeting element; sequence YMAL. Residues 866–885 are disordered; sequence MRKRARPRYSPLRDTDEEEL. The Internalization motif motif lies at 874 to 877; it reads YSPL.

Belongs to the herpesviridae glycoprotein B family. As to quaternary structure, homotrimer; disulfide-linked. Binds to heparan sulfate proteoglycans. Interacts with gH/gL heterodimer.

It localises to the virion membrane. The protein resides in the host cell membrane. It is found in the host endosome membrane. The protein localises to the host Golgi apparatus membrane. Functionally, envelope glycoprotein that forms spikes at the surface of virion envelope. Essential for the initial attachment to heparan sulfate moieties of the host cell surface proteoglycans. Involved in fusion of viral and cellular membranes leading to virus entry into the host cell. Following initial binding to its host receptors, membrane fusion is mediated by the fusion machinery composed at least of gB and the heterodimer gH/gL. May be involved in the fusion between the virion envelope and the outer nuclear membrane during virion egress. In Herpes simplex virus type 2 (strain SA8) (Simian agent 8), this protein is Envelope glycoprotein B.